The chain runs to 130 residues: Large ribosomal subunit protein bL21 (130 aa).

The interval 110-130 is disordered; it reads KTAAQPAADEAVAANEVDSEA. Over residues 112-130 the composition is skewed to low complexity; it reads AAQPAADEAVAANEVDSEA.

The protein belongs to the bacterial ribosomal protein bL21 family. Part of the 50S ribosomal subunit. Contacts protein L20.

In terms of biological role, this protein binds to 23S rRNA in the presence of protein L20. The protein is Large ribosomal subunit protein bL21 of Cyanothece sp. (strain PCC 7425 / ATCC 29141).